The sequence spans 695 residues: NADPH--cytochrome P450 reductase (695 aa).

The Lumenal segment spans residues methionine 1–aspartate 8. A helical transmembrane segment spans residues leucine 9 to valine 31. At proline 32–serine 695 the chain is on the cytoplasmic side. Positions cysteine 66 to tryptophan 221 constitute a Flavodoxin-like domain. Residues serine 72–alanine 77, alanine 123–glycine 126, leucine 169–glutamine 178, and aspartate 204 contribute to the FMN site. The 262-residue stretch at histidine 277 to proline 538 folds into the FAD-binding FR-type domain. NADP(+) is bound at residue arginine 296. FAD contacts are provided by residues arginine 451 to serine 454, threonine 469 to valine 471, and glycine 486 to threonine 489. Residues threonine 552, serine 614–arginine 615, lysine 620–glutamine 624, and glutamate 656 contribute to the NADP(+) site. Tryptophan 694 lines the FAD pocket.

It belongs to the NADPH--cytochrome P450 reductase family. The protein in the N-terminal section; belongs to the flavodoxin family. In the C-terminal section; belongs to the flavoprotein pyridine nucleotide cytochrome reductase family. It depends on FAD as a cofactor. FMN is required as a cofactor.

Its subcellular location is the endoplasmic reticulum membrane. It is found in the mitochondrion outer membrane. The protein resides in the cell membrane. The catalysed reaction is 2 oxidized [cytochrome P450] + NADPH = 2 reduced [cytochrome P450] + NADP(+) + H(+). Its function is as follows. This enzyme is required for electron transfer from NADP to cytochrome P450 in microsomes. It can also provide electron transfer to heme oxygenase and cytochrome B5. Involved in ergosterol biosynthesis. The sequence is that of NADPH--cytochrome P450 reductase from Aspergillus terreus (strain NIH 2624 / FGSC A1156).